Consider the following 298-residue polypeptide: Acetyl-coenzyme A carboxylase carboxyl transferase subunit beta (298 aa).

In terms of domain architecture, CoA carboxyltransferase N-terminal spans 26 to 295 (LWIKCPETGE…DNANAVVPLA (270 aa)).

Belongs to the AccD/PCCB family. In terms of assembly, acetyl-CoA carboxylase is a heterohexamer composed of biotin carboxyl carrier protein (AccB), biotin carboxylase (AccC) and two subunits each of ACCase subunit alpha (AccA) and ACCase subunit beta (AccD).

It is found in the cytoplasm. The enzyme catalyses N(6)-carboxybiotinyl-L-lysyl-[protein] + acetyl-CoA = N(6)-biotinyl-L-lysyl-[protein] + malonyl-CoA. It participates in lipid metabolism; malonyl-CoA biosynthesis; malonyl-CoA from acetyl-CoA: step 1/1. Functionally, component of the acetyl coenzyme A carboxylase (ACC) complex. Biotin carboxylase (BC) catalyzes the carboxylation of biotin on its carrier protein (BCCP) and then the CO(2) group is transferred by the transcarboxylase to acetyl-CoA to form malonyl-CoA. This Agrobacterium fabrum (strain C58 / ATCC 33970) (Agrobacterium tumefaciens (strain C58)) protein is Acetyl-coenzyme A carboxylase carboxyl transferase subunit beta.